We begin with the raw amino-acid sequence, 159 residues long: bZIP transcription factor 11 (159 aa).

Positions 1-21 (MESSSSGTTSSTIQTSSGSEE) are enriched in low complexity. The tract at residues 1–47 (MESSSSGTTSSTIQTSSGSEESLMEQRKRKRMLSNRESARRSRMKKQ) is disordered. The 64-residue stretch at 25-88 (EQRKRKRMLS…LTVEAENSVL (64 aa)) folds into the bZIP domain. A basic motif region spans residues 27-48 (RKRKRMLSNRESARRSRMKKQK). Residues 53-67 (LTAQVNHLKKENTEI) are leucine-zipper.

As to quaternary structure, forms heterodimers with BZIP1, BZIP9, BZIP10, BZIP25 and BZIP63. Interacts with ADA2B. As to expression, highly expressed in stems and flowers. Expressed in root tips, cotyledons, leaf vasculature, embryos, apical parts of siliques and funiculi.

The protein resides in the nucleus. In terms of biological role, transcription factor that binds to the DNA sequence 5'-ACTCAT-3' in target gene promoters. Promotes POX1/PRODH1 expression in response to hypoosmolarity stress. Positively regulates the expression of ASN1 and POX2/PRODH2 genes, which are involved in amino acid metabolism. Regulates several metabolic pathways such as myo-inositol, raffinose and trehalose. Regulates several trehalose metabolism genes, including TRE1, TPP5 and TPP6. Mediates recruitment of the histone acetylation machinery to activate auxin-induced transcription. Interacts with ADA2B adapter protein to promote ADA2B-mediated recruitment of SAGA-like histone acetyltransferase complexes to specific auxin-responsive genes. In Arabidopsis thaliana (Mouse-ear cress), this protein is bZIP transcription factor 11.